We begin with the raw amino-acid sequence, 204 residues long: Linker for activation of T-cells family member 2 (204 aa).

Residues 1–7 (MNAELEL) lie on the Extracellular side of the membrane. Residues 8 to 28 (LWPLSGLLLLLLLGTTAWLCV) form a helical; Signal-anchor for type III membrane protein membrane-spanning segment. Residues Cys27 and Cys30 are each lipidated (S-palmitoyl cysteine). Residues 29-204 (QCSRPGVKRN…NGDVATTEKI (176 aa)) lie on the Cytoplasmic side of the membrane. Tyr60 carries the phosphotyrosine modification. 2 positions are modified to phosphoserine: Ser61 and Ser96. Tyr140, Tyr161, and Tyr193 each carry phosphotyrosine. Residues 147-204 (KPSTPESGTEESEDYQNSVSILQWRESKRTMGARTSPSGSPDEEPDYVNGDVATTEKI) form a disordered region.

When phosphorylated, interacts with GRB2. May also interact with SOS1, GAB1 and CBL. Post-translationally, phosphorylated on tyrosines following cross-linking of BCR in B-cells, high affinity IgG receptor (FCGR1) in myeloid cells, or high affinity IgE receptor (FCER1) in mast cells; which induces the recruitment of GRB2.

It is found in the cell membrane. Involved in FCER1 (high affinity immunoglobulin epsilon receptor)-mediated signaling in mast cells. May also be involved in BCR (B-cell antigen receptor)-mediated signaling in B-cells and FCGR1 (high affinity immunoglobulin gamma Fc receptor I)-mediated signaling in myeloid cells. Couples activation of these receptors and their associated kinases with distal intracellular events through the recruitment of GRB2. The polypeptide is Linker for activation of T-cells family member 2 (Lat2) (Rattus norvegicus (Rat)).